The sequence spans 103 residues: Large ribosomal subunit protein bL21 (103 aa).

It belongs to the bacterial ribosomal protein bL21 family. Part of the 50S ribosomal subunit. Contacts protein L20.

Functionally, this protein binds to 23S rRNA in the presence of protein L20. This is Large ribosomal subunit protein bL21 from Clostridium perfringens (strain ATCC 13124 / DSM 756 / JCM 1290 / NCIMB 6125 / NCTC 8237 / Type A).